Consider the following 379-residue polypeptide: Endonuclease III homolog 1, chloroplastic (379 aa).

A chloroplast-targeting transit peptide spans 1–54 (MILLVNGGAATSIHPNAARFYRIGTMSRQIHGAVSSSKHISLKTQHPLSDSNSE). The region spanning 244–272 (KYDGDIPSSLDDLLSLPGIGPKMAHLILH) is the HhH domain. Lysine 265 functions as the Nucleophile; for N-glycosylase activity in the catalytic mechanism. 4 residues coordinate [4Fe-4S] cluster: cysteine 340, cysteine 347, cysteine 350, and cysteine 356.

The protein belongs to the Nth/MutY family. It depends on [4Fe-4S] cluster as a cofactor. Expressed at low levels in roots, stems, leaves and flowers.

The protein localises to the plastid. Its subcellular location is the chloroplast stroma. It is found in the chloroplast nucleoid. The catalysed reaction is 2'-deoxyribonucleotide-(2'-deoxyribose 5'-phosphate)-2'-deoxyribonucleotide-DNA = a 3'-end 2'-deoxyribonucleotide-(2,3-dehydro-2,3-deoxyribose 5'-phosphate)-DNA + a 5'-end 5'-phospho-2'-deoxyribonucleoside-DNA + H(+). Bifunctional DNA N-glycosylase with associated apurinic/apyrimidinic (AP) lyase function that catalyzes the first step in base excision repair (BER), the primary repair pathway for the repair of oxidative DNA damage. The DNA N-glycosylase activity releases the damaged DNA base from DNA by cleaving the N-glycosidic bond, leaving an AP site. The AP lyase activity cleaves the phosphodiester bond 3' to the AP site by a beta-elimination. Primarily recognizes and repairs oxidative base damage of pyrimidines. The protein is Endonuclease III homolog 1, chloroplastic of Arabidopsis thaliana (Mouse-ear cress).